A 443-amino-acid polypeptide reads, in one-letter code: Flavastacin (443 aa).

A signal peptide spans 1–15; the sequence is MTRKLLILSGCLILA. Positions 16-91 are cleaved as a propeptide — activation peptide; the sequence is LNSCKSDMET…ANPDISTVER (76 aa). One can recognise a Peptidase M12A domain in the interval 92 to 289; sequence STIVSSFIKT…AGINHLYGPV (198 aa). Position 189 (histidine 189) interacts with Zn(2+). Residue glutamate 190 is part of the active site. 2 residues coordinate Zn(2+): histidine 193 and histidine 199. A Ricin B-type lectin domain is found at 297-440; the sequence is GTYTLTTSLA…PYTKQRFTLT (144 aa). The O-linked (Man...) serine glycan is linked to serine 355.

Zn(2+) serves as cofactor. O-linked glycan consists of the Man, GlcNAc, GlcU, Glc, GlcU, Rha, Man heptasaccharide.

It carries out the reaction Hydrolyzes polypeptides on the amino-side of Asp in -Xaa-|-Asp-. Acts very slowly on -Xaa-|-Glu.. Functionally, zinc metallendopeptidase that cleaves preferentially on N-terminal side of aspartate-containing substrates. In Elizabethkingia meningoseptica (Chryseobacterium meningosepticum), this protein is Flavastacin.